The following is a 71-amino-acid chain: Translation initiation factor IF-1 (71 aa).

Residues 1-71 enclose the S1-like domain; the sequence is MSKDDLIQFT…LTKGRVIHRH (71 aa).

This sequence belongs to the IF-1 family. In terms of assembly, component of the 30S ribosomal translation pre-initiation complex which assembles on the 30S ribosome in the order IF-2 and IF-3, IF-1 and N-formylmethionyl-tRNA(fMet); mRNA recruitment can occur at any time during PIC assembly.

The protein resides in the cytoplasm. Its function is as follows. One of the essential components for the initiation of protein synthesis. Stabilizes the binding of IF-2 and IF-3 on the 30S subunit to which N-formylmethionyl-tRNA(fMet) subsequently binds. Helps modulate mRNA selection, yielding the 30S pre-initiation complex (PIC). Upon addition of the 50S ribosomal subunit IF-1, IF-2 and IF-3 are released leaving the mature 70S translation initiation complex. The chain is Translation initiation factor IF-1 from Rickettsia akari (strain Hartford).